Consider the following 397-residue polypeptide: Glia-derived nexin (397 aa).

An N-terminal signal peptide occupies residues 1 to 19 (MNWHFPFFILTTVTLYSVH). The N-linked (GlcNAc...) asparagine glycan is linked to Asn159.

This sequence belongs to the serpin family. In terms of tissue distribution, most abundant in seminal vesicles.

The protein resides in the secreted. It localises to the extracellular space. In terms of biological role, serine protease inhibitor with activity toward thrombin, trypsin, and urokinase. Promotes neurite extension by inhibiting thrombin. Binds heparin. This Mus musculus (Mouse) protein is Glia-derived nexin (Serpine2).